We begin with the raw amino-acid sequence, 118 residues long: MPRVKGGTVTRQRRKKIMKLAKGYRGAKHMQFKAASTQLFVSYKYAFRDRRRRKSDFRKLWIARINAAARQNDISYSKLMHGLKLAGVDMNRKMLADIAYNDSKTFAQLADTAKKALN.

This sequence belongs to the bacterial ribosomal protein bL20 family.

Functionally, binds directly to 23S ribosomal RNA and is necessary for the in vitro assembly process of the 50S ribosomal subunit. It is not involved in the protein synthesizing functions of that subunit. The chain is Large ribosomal subunit protein bL20 from Lactobacillus acidophilus (strain ATCC 700396 / NCK56 / N2 / NCFM).